A 239-amino-acid polypeptide reads, in one-letter code: tRNA (guanine-N(7)-)-methyltransferase (239 aa).

S-adenosyl-L-methionine is bound by residues glutamate 68, glutamate 93, aspartate 120, and aspartate 143. Aspartate 143 is a catalytic residue. Residues lysine 147, aspartate 180, and threonine 217–glutamate 220 contribute to the substrate site.

Belongs to the class I-like SAM-binding methyltransferase superfamily. TrmB family.

It catalyses the reaction guanosine(46) in tRNA + S-adenosyl-L-methionine = N(7)-methylguanosine(46) in tRNA + S-adenosyl-L-homocysteine. The protein operates within tRNA modification; N(7)-methylguanine-tRNA biosynthesis. In terms of biological role, catalyzes the formation of N(7)-methylguanine at position 46 (m7G46) in tRNA. The sequence is that of tRNA (guanine-N(7)-)-methyltransferase from Vibrio vulnificus (strain CMCP6).